We begin with the raw amino-acid sequence, 183 residues long: Translation initiation factor IF-3 (183 aa).

The protein belongs to the IF-3 family. Monomer.

Its subcellular location is the cytoplasm. In terms of biological role, IF-3 binds to the 30S ribosomal subunit and shifts the equilibrium between 70S ribosomes and their 50S and 30S subunits in favor of the free subunits, thus enhancing the availability of 30S subunits on which protein synthesis initiation begins. The polypeptide is Translation initiation factor IF-3 (Pseudomonas putida (strain ATCC 700007 / DSM 6899 / JCM 31910 / BCRC 17059 / LMG 24140 / F1)).